A 216-amino-acid chain; its full sequence is Large ribosomal subunit protein uL3 (216 aa).

A disordered region spans residues 134–153; the sequence is RATHGNSRSHNVPGSIGMAQ. Gln-153 is subject to N5-methylglutamine.

This sequence belongs to the universal ribosomal protein uL3 family. In terms of assembly, part of the 50S ribosomal subunit. Forms a cluster with proteins L14 and L19. In terms of processing, methylated by PrmB.

One of the primary rRNA binding proteins, it binds directly near the 3'-end of the 23S rRNA, where it nucleates assembly of the 50S subunit. The polypeptide is Large ribosomal subunit protein uL3 (Cupriavidus taiwanensis (strain DSM 17343 / BCRC 17206 / CCUG 44338 / CIP 107171 / LMG 19424 / R1) (Ralstonia taiwanensis (strain LMG 19424))).